Reading from the N-terminus, the 508-residue chain is Photosystem II CP47 reaction center protein (508 aa).

Helical transmembrane passes span 21 to 36, 101 to 115, 140 to 156, 203 to 218, 237 to 252, and 457 to 472; these read AVHL…WAGS, ITLS…IWHW, GIHL…FGAF, IAAG…FHLS, VLSS…AFVV, and TFAL…HGAR.

This sequence belongs to the PsbB/PsbC family. PsbB subfamily. PSII is composed of 1 copy each of membrane proteins PsbA, PsbB, PsbC, PsbD, PsbE, PsbF, PsbH, PsbI, PsbJ, PsbK, PsbL, PsbM, PsbT, PsbX, PsbY, PsbZ, Psb30/Ycf12, at least 3 peripheral proteins of the oxygen-evolving complex and a large number of cofactors. It forms dimeric complexes. Binds multiple chlorophylls. PSII binds additional chlorophylls, carotenoids and specific lipids. serves as cofactor.

It is found in the plastid. Its subcellular location is the chloroplast thylakoid membrane. Its function is as follows. One of the components of the core complex of photosystem II (PSII). It binds chlorophyll and helps catalyze the primary light-induced photochemical processes of PSII. PSII is a light-driven water:plastoquinone oxidoreductase, using light energy to abstract electrons from H(2)O, generating O(2) and a proton gradient subsequently used for ATP formation. The polypeptide is Photosystem II CP47 reaction center protein (Psilotum nudum (Whisk fern)).